Consider the following 297-residue polypeptide: MSNWLVDKLIPSIMRSEVKKSSVPEGLWHKCPACEAVLYRPELEKTLDVCPKCNHHMRIGARQRIDIFLDAEGRAELGAELEPVDRLKFRDGKKYKDRLVGAQKQTGEKDALISMSGTLMGMPIVVSAFEFSFMGGSMGAVVGERFVRAANHALENRCPMICFSASGGARMQEALISLMQMAKTSAVLARLREEGIPFISVLTDPVYGGVSASLAMLGDVIVGEPKALIGFAGPRVIEQTVREKLPEGFQRSEFLLEHGAIDLIISRGELRPRLARLLAQMTGQETPEQAREAAAVA.

The 270-residue stretch at Leu-27–Val-296 folds into the CoA carboxyltransferase N-terminal domain. Positions 31, 34, 50, and 53 each coordinate Zn(2+). The C4-type zinc finger occupies Cys-31–Cys-53.

It belongs to the AccD/PCCB family. As to quaternary structure, acetyl-CoA carboxylase is a heterohexamer composed of biotin carboxyl carrier protein (AccB), biotin carboxylase (AccC) and two subunits each of ACCase subunit alpha (AccA) and ACCase subunit beta (AccD). The cofactor is Zn(2+).

It is found in the cytoplasm. The catalysed reaction is N(6)-carboxybiotinyl-L-lysyl-[protein] + acetyl-CoA = N(6)-biotinyl-L-lysyl-[protein] + malonyl-CoA. Its pathway is lipid metabolism; malonyl-CoA biosynthesis; malonyl-CoA from acetyl-CoA: step 1/1. Functionally, component of the acetyl coenzyme A carboxylase (ACC) complex. Biotin carboxylase (BC) catalyzes the carboxylation of biotin on its carrier protein (BCCP) and then the CO(2) group is transferred by the transcarboxylase to acetyl-CoA to form malonyl-CoA. The polypeptide is Acetyl-coenzyme A carboxylase carboxyl transferase subunit beta (Pseudomonas putida (strain W619)).